Consider the following 216-residue polypeptide: Triosephosphate isomerase (216 aa).

7–9 contributes to the substrate binding site; it reads NLK. The active-site Electrophile is His89. Catalysis depends on Glu137, which acts as the Proton acceptor. Substrate is bound by residues Ile142, Gly175, and 196–197; that span reads AS.

This sequence belongs to the triosephosphate isomerase family. Homotetramer; dimer of dimers.

The protein resides in the cytoplasm. It catalyses the reaction D-glyceraldehyde 3-phosphate = dihydroxyacetone phosphate. The protein operates within carbohydrate biosynthesis; gluconeogenesis. It participates in carbohydrate degradation; glycolysis; D-glyceraldehyde 3-phosphate from glycerone phosphate: step 1/1. Its function is as follows. Involved in the gluconeogenesis. Catalyzes stereospecifically the conversion of dihydroxyacetone phosphate (DHAP) to D-glyceraldehyde-3-phosphate (G3P). The chain is Triosephosphate isomerase from Thermoplasma acidophilum (strain ATCC 25905 / DSM 1728 / JCM 9062 / NBRC 15155 / AMRC-C165).